Consider the following 788-residue polypeptide: MSNIKTRLQKARSKFSRRNSEASTRARSIASSAGSDRHGHAPPPPLSSPLRKSVSLPRLAEPAASGKALGLGAHGDDDDDEQLLVVGRAATESQADAEASTGSLNTSRDGRSSCTQASTAPSSSHDARKPSADVPIVCPQVTLDAPTPVHPGAPPAELDRPALPDSLSSTPSSVPATTTTTATTTATTTSLPPSPARVHRHAAITTAHAADARLATNLPGPDDSQAATPSGPPPSTARSAAMLHRKIWVKRPNASATLVQIREDDLVDDVRDMILKKYANSLGRSFDAPDVTLRIVPRDSQRAGERTLGPEEDMCRTIDAYFPGGQTVHEALIIDVPSRRTPKPSPRVPPYYHHEDGIHPQTEYFPPMSAMTPSPATMSTSLQHPHDNRIPVPQLHSISVLNTGQLPNLPSPGSTRRGPMHPHRPKYNRTHTASPTTLGGGIPSSATSVRPANRPRHDSSASEAKNSAASNNPIPTPPIPADPTPHQQTLQTSTPPTPRISSPQLNTKKKRRKAPVEPPALPAGLLDGSVPPINVLIVEDNIINLRVLGAFMQRLKVRWQRAMNGKEAVTKWKAGGFHLVLMDIQLPVMNGLEATKEIRRLERVNGIGVFSSGSSEAPNTRLGSDSKSQDELREDDKLGDKGMFKSPVIIVALTASSLQSDRHEALAAGCNDFLTKPVNFVWLERKVKEWGCMQALIDFDGWRKWKDFADKSENNDTTSKLSGSFTSVAPNKKAANTSPTTATSETNGVKKDAETERKNKRKSLGVVPQPVLREEAEPQPAEVDSGDN.

The region spanning 534–691 (NVLIVEDNII…WLERKVKEWG (158 aa)) is the Response regulatory domain. Residue D583 is modified to 4-aspartylphosphate.

The protein belongs to the SSK1 family.

The protein localises to the cytoplasm. Two-domain response regulator protein in the two-component signal transduction system of the HOG1 pathway. Controls high-osmolarity adaptation and fungicide sensitivity via its regulation of the phosphorylation of HOG1. In Cochliobolus heterostrophus (strain C5 / ATCC 48332 / race O) (Southern corn leaf blight fungus), this protein is Response regulator SSK1.